The following is a 317-amino-acid chain: Beta-ketoacyl-[acyl-carrier-protein] synthase III (317 aa).

Residues cysteine 112 and histidine 244 contribute to the active site. The ACP-binding stretch occupies residues 245–249; sequence QANVR. The active site involves asparagine 274.

This sequence belongs to the thiolase-like superfamily. FabH family. In terms of assembly, homodimer.

Its subcellular location is the cytoplasm. The enzyme catalyses malonyl-[ACP] + acetyl-CoA + H(+) = 3-oxobutanoyl-[ACP] + CO2 + CoA. It functions in the pathway lipid metabolism; fatty acid biosynthesis. Its function is as follows. Catalyzes the condensation reaction of fatty acid synthesis by the addition to an acyl acceptor of two carbons from malonyl-ACP. Catalyzes the first condensation reaction which initiates fatty acid synthesis and may therefore play a role in governing the total rate of fatty acid production. Possesses both acetoacetyl-ACP synthase and acetyl transacylase activities. Its substrate specificity determines the biosynthesis of branched-chain and/or straight-chain of fatty acids. The protein is Beta-ketoacyl-[acyl-carrier-protein] synthase III of Rickettsia bellii (strain OSU 85-389).